Here is a 341-residue protein sequence, read N- to C-terminus: Probable UDP-glucuronate 4-epimerase (341 aa).

The active-site Proton acceptor is Tyr-152.

This sequence belongs to the NAD(P)-dependent epimerase/dehydratase family. The cofactor is NAD(+).

It carries out the reaction UDP-alpha-D-glucuronate = UDP-alpha-D-galacturonate. The polypeptide is Probable UDP-glucuronate 4-epimerase (Rhizobium meliloti (strain 1021) (Ensifer meliloti)).